A 286-amino-acid polypeptide reads, in one-letter code: Phosphatidylglycerol--prolipoprotein diacylglyceryl transferase (286 aa).

4 consecutive transmembrane segments (helical) span residues 25–45, 65–85, 103–123, and 127–147; these read WYAL…RMLL, FILW…VLFY, GGMS…LFGW, and VPIL…LFLG. A 1,2-diacyl-sn-glycero-3-phospho-(1'-sn-glycerol) is bound at residue Arg148. Transmembrane regions (helical) follow at residues 188 to 208, 212 to 232, and 248 to 268; these read AGLE…AGAL, GLII…GEFF, and MGML…ITTW.

The protein belongs to the Lgt family.

It localises to the cell inner membrane. It carries out the reaction L-cysteinyl-[prolipoprotein] + a 1,2-diacyl-sn-glycero-3-phospho-(1'-sn-glycerol) = an S-1,2-diacyl-sn-glyceryl-L-cysteinyl-[prolipoprotein] + sn-glycerol 1-phosphate + H(+). It functions in the pathway protein modification; lipoprotein biosynthesis (diacylglyceryl transfer). Its function is as follows. Catalyzes the transfer of the diacylglyceryl group from phosphatidylglycerol to the sulfhydryl group of the N-terminal cysteine of a prolipoprotein, the first step in the formation of mature lipoproteins. In Rhodopseudomonas palustris (strain ATCC BAA-98 / CGA009), this protein is Phosphatidylglycerol--prolipoprotein diacylglyceryl transferase.